The chain runs to 132 residues: Translation initiation factor 5A (132 aa).

K36 bears the Hypusine mark.

It belongs to the eIF-5A family.

The protein localises to the cytoplasm. Its function is as follows. Functions by promoting the formation of the first peptide bond. This is Translation initiation factor 5A (eIF5A) from Caldivirga maquilingensis (strain ATCC 700844 / DSM 13496 / JCM 10307 / IC-167).